Consider the following 291-residue polypeptide: Sulfotransferase 1A1 (291 aa).

Position 44–49 (lysine 44–tryptophan 49) interacts with 3'-phosphoadenylyl sulfate. Lysine 102–histidine 104 contacts substrate. Histidine 104 acts as the Proton acceptor in catalysis. 3'-phosphoadenylyl sulfate is bound by residues arginine 126, serine 134, tyrosine 189, threonine 223–methionine 228, and phenylalanine 251–glycine 255. Phosphoserine is present on serine 134.

This sequence belongs to the sulfotransferase 1 family. As to quaternary structure, homodimer. The N-terminus is blocked. In terms of tissue distribution, liver, kidney, heart and colon.

It is found in the cytoplasm. The enzyme catalyses a phenol + 3'-phosphoadenylyl sulfate = an aryl sulfate + adenosine 3',5'-bisphosphate + H(+). It catalyses the reaction 17beta-estradiol + 3'-phosphoadenylyl sulfate = 17beta-estradiol 3-sulfate + adenosine 3',5'-bisphosphate + H(+). It carries out the reaction 4-ethylphenol + 3'-phosphoadenylyl sulfate = 4-ethylphenyl sulfate + adenosine 3',5'-bisphosphate + H(+). The catalysed reaction is 4-nitrophenol + 3'-phosphoadenylyl sulfate = 4-nitrophenyl sulfate + adenosine 3',5'-bisphosphate. The enzyme catalyses dopamine + 3'-phosphoadenylyl sulfate = dopamine 3-O-sulfate + adenosine 3',5'-bisphosphate + H(+). It catalyses the reaction dopamine + 3'-phosphoadenylyl sulfate = dopamine 4-O-sulfate + adenosine 3',5'-bisphosphate + H(+). It carries out the reaction 3,3',5-triiodo-L-thyronine + 3'-phosphoadenylyl sulfate = 3,3',5-triiodo-L-thyronine sulfate + adenosine 3',5'-bisphosphate + H(+). The catalysed reaction is 3,3',5'-triiodo-L-thyronine + 3'-phosphoadenylyl sulfate = 3,3',5'-triiodo-L-thyronine sulfate + adenosine 3',5'-bisphosphate + H(+). The enzyme catalyses 3,3'-diiodo-L-thyronine + 3'-phosphoadenylyl sulfate = 3,3'-diiodo-L-thyronine sulfate + adenosine 3',5'-bisphosphate + H(+). It catalyses the reaction L-thyroxine + 3'-phosphoadenylyl sulfate = L-thyroxine sulfate + adenosine 3',5'-bisphosphate + H(+). Functionally, sulfotransferase that utilizes 3'-phospho-5'-adenylyl sulfate (PAPS) as sulfonate donor to catalyze the sulfate conjugation of a wide variety of acceptor molecules bearing a hydroxyl or an amine group. Sulfonation increases the water solubility of most compounds, and therefore their renal excretion, but it can also result in bioactivation to form active metabolites. Displays broad substrate specificity for small phenolic compounds. Plays an important roles in the sulfonation of endogenous molecules such as steroid hormones. Mediates the sulfate conjugation of a variety of xenobiotics, including the drugs acetaminophen and minoxidil. Mediates also the metabolic activation of carcinogenic N-hydroxyarylamines leading to highly reactive intermediates capable of forming DNA adducts, potentially resulting in mutagenesis. May play a role in gut microbiota-host metabolic interaction. O-sulfonates 4-ethylphenol (4-EP), a dietary tyrosine-derived metabolite produced by gut bacteria. The product 4-EPS crosses the blood-brain barrier and may negatively regulate oligodendrocyte maturation and myelination, affecting the functional connectivity of different brain regions associated with the limbic system. Catalyzes the sulfate conjugation of dopamine. Catalyzes the sulfation of T4 (L-thyroxine/3,5,3',5'-tetraiodothyronine), T3 (3,5,3'-triiodothyronine), rT3 (3,3',5'-triiodothyronine) and 3,3'-T2 (3,3'-diiodothyronine), with a substrate preference of 3,3'-T2 &gt; rT3 &gt; T3 &gt; T4. In Rattus norvegicus (Rat), this protein is Sulfotransferase 1A1 (Sult1a1).